Here is a 388-residue protein sequence, read N- to C-terminus: Chorismate synthase (388 aa).

Arg39 and Arg45 together coordinate NADP(+). FMN-binding positions include 130 to 132 (RSS), 251 to 252 (NA), Gly296, 311 to 315 (KPIPT), and Arg337.

This sequence belongs to the chorismate synthase family. As to quaternary structure, homotetramer. It depends on FMNH2 as a cofactor.

It carries out the reaction 5-O-(1-carboxyvinyl)-3-phosphoshikimate = chorismate + phosphate. It functions in the pathway metabolic intermediate biosynthesis; chorismate biosynthesis; chorismate from D-erythrose 4-phosphate and phosphoenolpyruvate: step 7/7. Functionally, catalyzes the anti-1,4-elimination of the C-3 phosphate and the C-6 proR hydrogen from 5-enolpyruvylshikimate-3-phosphate (EPSP) to yield chorismate, which is the branch point compound that serves as the starting substrate for the three terminal pathways of aromatic amino acid biosynthesis. This reaction introduces a second double bond into the aromatic ring system. The protein is Chorismate synthase of Lactococcus lactis subsp. lactis (strain IL1403) (Streptococcus lactis).